The sequence spans 283 residues: Release factor glutamine methyltransferase (283 aa).

The S-adenosyl-L-methionine site is built by Asp143 and Asn189. 189-192 contacts substrate; sequence NPPY.

This sequence belongs to the protein N5-glutamine methyltransferase family. PrmC subfamily.

The enzyme catalyses L-glutaminyl-[peptide chain release factor] + S-adenosyl-L-methionine = N(5)-methyl-L-glutaminyl-[peptide chain release factor] + S-adenosyl-L-homocysteine + H(+). Its function is as follows. Methylates the class 1 translation termination release factors RF1/PrfA and RF2/PrfB on the glutamine residue of the universally conserved GGQ motif. The sequence is that of Release factor glutamine methyltransferase from Clostridium botulinum (strain Hall / ATCC 3502 / NCTC 13319 / Type A).